A 509-amino-acid chain; its full sequence is Probable cytochrome P450 519B1 (509 aa).

A helical membrane pass occupies residues Met-1–Arg-21. Residue Cys-456 participates in heme binding.

This sequence belongs to the cytochrome P450 family. It depends on heme as a cofactor.

Its subcellular location is the membrane. The sequence is that of Probable cytochrome P450 519B1 (cyp519B1) from Dictyostelium discoideum (Social amoeba).